We begin with the raw amino-acid sequence, 110 residues long: Large ribosomal subunit protein uL22 (110 aa).

This sequence belongs to the universal ribosomal protein uL22 family. In terms of assembly, part of the 50S ribosomal subunit.

This protein binds specifically to 23S rRNA; its binding is stimulated by other ribosomal proteins, e.g. L4, L17, and L20. It is important during the early stages of 50S assembly. It makes multiple contacts with different domains of the 23S rRNA in the assembled 50S subunit and ribosome. Functionally, the globular domain of the protein is located near the polypeptide exit tunnel on the outside of the subunit, while an extended beta-hairpin is found that lines the wall of the exit tunnel in the center of the 70S ribosome. The sequence is that of Large ribosomal subunit protein uL22 from Solidesulfovibrio magneticus (strain ATCC 700980 / DSM 13731 / RS-1) (Desulfovibrio magneticus).